Here is a 257-residue protein sequence, read N- to C-terminus: Acetylglutamate kinase (257 aa).

Residues 43–44 (GG), Arg65, and Asn157 contribute to the substrate site. ATP is bound by residues 180 to 185 (DVSGIL) and 208 to 210 (IIT).

It belongs to the acetylglutamate kinase family. ArgB subfamily. Homodimer.

It is found in the cytoplasm. It catalyses the reaction N-acetyl-L-glutamate + ATP = N-acetyl-L-glutamyl 5-phosphate + ADP. It participates in amino-acid biosynthesis; L-arginine biosynthesis; N(2)-acetyl-L-ornithine from L-glutamate: step 2/4. Catalyzes the ATP-dependent phosphorylation of N-acetyl-L-glutamate. The chain is Acetylglutamate kinase from Serratia proteamaculans (strain 568).